Here is a 98-residue protein sequence, read N- to C-terminus: Small ribosomal subunit protein bS21B (98 aa).

Residues 61–98 (KLQREGLLPMKPKPVFGAGAGGERGGRGGPGAGPRGPR) are disordered. Gly residues predominate over residues 78 to 98 (AGAGGERGGRGGPGAGPRGPR).

It belongs to the bacterial ribosomal protein bS21 family.

The protein is Small ribosomal subunit protein bS21B of Bradyrhizobium diazoefficiens (strain JCM 10833 / BCRC 13528 / IAM 13628 / NBRC 14792 / USDA 110).